Reading from the N-terminus, the 471-residue chain is 3-isopropylmalate dehydratase large subunit (471 aa).

[4Fe-4S] cluster-binding residues include C347, C407, and C410.

Belongs to the aconitase/IPM isomerase family. LeuC type 1 subfamily. Heterodimer of LeuC and LeuD. The cofactor is [4Fe-4S] cluster.

It carries out the reaction (2R,3S)-3-isopropylmalate = (2S)-2-isopropylmalate. It functions in the pathway amino-acid biosynthesis; L-leucine biosynthesis; L-leucine from 3-methyl-2-oxobutanoate: step 2/4. In terms of biological role, catalyzes the isomerization between 2-isopropylmalate and 3-isopropylmalate, via the formation of 2-isopropylmaleate. In Anoxybacillus flavithermus (strain DSM 21510 / WK1), this protein is 3-isopropylmalate dehydratase large subunit.